The primary structure comprises 196 residues: Ribosome maturation factor RimM (196 aa).

Residues 118–196 (QGEYYWRDLI…EMTVDWDPDF (79 aa)) form the PRC barrel domain.

Belongs to the RimM family. Binds ribosomal protein uS19.

The protein resides in the cytoplasm. In terms of biological role, an accessory protein needed during the final step in the assembly of 30S ribosomal subunit, possibly for assembly of the head region. Essential for efficient processing of 16S rRNA. May be needed both before and after RbfA during the maturation of 16S rRNA. It has affinity for free ribosomal 30S subunits but not for 70S ribosomes. This is Ribosome maturation factor RimM from Alcanivorax borkumensis (strain ATCC 700651 / DSM 11573 / NCIMB 13689 / SK2).